Consider the following 422-residue polypeptide: Synaptotagmin-1 (422 aa).

The Vesicular portion of the chain corresponds to 1-57 (MVSESHHEALAAPPVTTVATVLPSNATEPASPGEGKEDAFSKLKEKFMNELHKIPLP). The N-linked (GlcNAc...) asparagine glycan is linked to Asn-25. Residues 58 to 80 (PWALIAIAIVAVLLVLTCCFCIC) form a helical membrane-spanning segment. Residues Cys-75, Cys-76, Cys-78, Cys-80, and Cys-83 are each lipidated (S-palmitoyl cysteine). The Cytoplasmic segment spans residues 81-422 (KKCLFKKKNK…EVDAMLAVKK (342 aa)). Positions 113 to 142 (TMKDQALKDDDAETGLTDGEEKEEPKEEEK) are disordered. A compositionally biased stretch (acidic residues) spans 122–134 (DDAETGLTDGEEK). Phosphothreonine is present on Thr-129. Positions 136–382 (EPKEEEKLGK…AIGKVFVGYN (247 aa)) are phospholipid binding. In terms of domain architecture, C2 1 spans 142–261 (KLGKLQYSLD…DFGHVTEEWR (120 aa)). The Ca(2+) site is built by Leu-172, Asp-173, and Asp-179. The residue at position 230 (Tyr-230) is a Phosphotyrosine. 6 residues coordinate Ca(2+): Asp-231, Phe-232, Asp-233, Ser-236, Lys-237, and Asp-239. Residue Ser-265 is modified to Phosphoserine. A C2 2 domain is found at 273-406 (KLGDICFSLR…NPRRPIAQWH (134 aa)). 2 residues coordinate Ca(2+): Asp-304 and Asp-310. Phosphoserine occurs at positions 343 and 345. Asp-364, Asp-366, and Asp-372 together coordinate Ca(2+).

The protein belongs to the synaptotagmin family. As to quaternary structure, homotetramer. Heterodimer; heterodimerizes with SYT2 in presence of calcium. Interacts with SCAMP5. Interacts with STON2. Forms a complex with SV2B, syntaxin 1 and SNAP25. Interacts with SV2A, SV2B and SV2C. Interacts with RIMS1. Interacts with PRRT2. Interacts with DNAJC5 in a phosphorylation-dependent manner. Interacts (via N-terminus) with RAB3A. Interacts with SYT12. Interacts with calmodulin. Interacts with DNM1 (via C-terminal proline-rich domain (PRD)); this interaction facilitates vesicle fission during clathrin-mediated endocytosis (CME). Ca(2+) is required as a cofactor. Post-translationally, glycosylated. As to expression, expressed in melanocytes.

The protein resides in the cytoplasmic vesicle. It is found in the secretory vesicle membrane. It localises to the secretory vesicle. The protein localises to the synaptic vesicle membrane. Its subcellular location is the chromaffin granule membrane. The protein resides in the cytoplasm. Its function is as follows. Calcium sensor that participates in triggering neurotransmitter release at the synapse. May have a regulatory role in the membrane interactions during trafficking of synaptic vesicles at the active zone of the synapse. It binds acidic phospholipids with a specificity that requires the presence of both an acidic head group and a diacyl backbone. A Ca(2+)-dependent interaction between synaptotagmin and putative receptors for activated protein kinase C has also been reported. It can bind to at least three additional proteins in a Ca(2+)-independent manner; these are neurexins, syntaxin and AP2. Plays a role in dendrite formation by melanocytes. This Homo sapiens (Human) protein is Synaptotagmin-1.